We begin with the raw amino-acid sequence, 91 residues long: Small ribosomal subunit protein uS19 (91 aa).

Belongs to the universal ribosomal protein uS19 family.

Protein S19 forms a complex with S13 that binds strongly to the 16S ribosomal RNA. This Bordetella pertussis (strain Tohama I / ATCC BAA-589 / NCTC 13251) protein is Small ribosomal subunit protein uS19.